Reading from the N-terminus, the 84-residue chain is MAHKKAGGSTRNGRDSNAQRLGIKCFGGELIPAGSIIVRQRGTKFHPGKNVGCGKDHTIFATVKGKVEFKKKGIKKRTYINIVR.

The protein belongs to the bacterial ribosomal protein bL27 family.

The protein is Large ribosomal subunit protein bL27 of Buchnera aphidicola subsp. Schizaphis graminum (strain Sg).